We begin with the raw amino-acid sequence, 61 residues long: Metallothionein-2B (61 aa).

Met-1 is subject to N-acetylmethionine. Positions 1–29 are beta; that stretch reads MDPNCSCATGDSCTCASSCKCKECKCTSC. A divalent metal cation-binding residues include Cys-5, Cys-7, Cys-13, Cys-15, Cys-19, Cys-21, Cys-24, Cys-26, Cys-29, Cys-33, Cys-34, Cys-36, Cys-37, Cys-41, Cys-44, Cys-48, Cys-50, Cys-57, Cys-59, and Cys-60. Residues 30-61 form an alpha region; it reads KKSCCSCCPAGCTKCAQGCICKGASDKCSCCA.

This sequence belongs to the metallothionein superfamily. Type 1 family. Monomer.

In terms of biological role, metallothioneins have a high content of cysteine residues that bind various heavy metals; these proteins are transcriptionally regulated by both heavy metals and glucocorticoids. The chain is Metallothionein-2B from Oryctolagus cuniculus (Rabbit).